We begin with the raw amino-acid sequence, 304 residues long: Spore coat protein CotB (304 aa).

It localises to the spore coat. Its subcellular location is the spore. The protein resides in the perispore. In terms of biological role, contributes to the formation of thick-exosporium spores. The protein is Spore coat protein CotB of Clostridioides difficile (strain 630) (Peptoclostridium difficile).